The chain runs to 452 residues: Phosphoglucosamine mutase (452 aa).

The Phosphoserine intermediate role is filled by serine 98. Mg(2+) is bound by residues serine 98, aspartate 239, aspartate 241, and aspartate 243. At serine 98 the chain carries Phosphoserine.

Belongs to the phosphohexose mutase family. The cofactor is Mg(2+). Activated by phosphorylation.

The catalysed reaction is alpha-D-glucosamine 1-phosphate = D-glucosamine 6-phosphate. In terms of biological role, catalyzes the conversion of glucosamine-6-phosphate to glucosamine-1-phosphate. The protein is Phosphoglucosamine mutase of Anaplasma marginale (strain St. Maries).